A 146-amino-acid polypeptide reads, in one-letter code: Decarboxylase dmxR15 (146 aa).

The EthD domain maps to 31 to 126; the sequence is PGMSEGDYRN…MHDHEVFADT (96 aa).

The protein belongs to the tpcK family.

It catalyses the reaction atrochrysone carboxylate + H(+) = atrochrysone + CO2. Its pathway is secondary metabolite biosynthesis. Functionally, decarboxylase; part of the gene cluster that mediates the biosynthesis of the dimeric xanthones cryptosporioptides. The pathway begins with the synthesis of atrochrysone thioester by the polyketide synthase dmx-nrPKS. The atrochrysone carboxyl ACP thioesterase dmxR1 then breaks the thioester bond and releases the atrochrysone carboxylic acid from dmx-nrPKS. Atrochrysone carboxylic acid is decarboxylated by the decarboxylase dmxR15, and oxidized by the anthrone oxygenase dmxR16 to yield emodin. Emodin is then reduced to emodin hydroquinone by the oxidoreductase dmxR7. A-ring reduction by the short chain dehydrogenase dmxR18, dehydration by the scytalone dehydratase-like protein dmxR17 and probable spontaneous re-oxidation, results in overall deoxygenation to chrysophanol. Baeyer-Villiger oxidation by the Baeyer-Villiger monooxygenase (BVMO) dmxR6 then yields monodictylactone in equilibrium with monodictyphenone. In the case of the cryptosporioptides biosynthesis, monodictylactone is reduced at C-12 to an alcohol (by the short chain dehydrogenases dmxR12 or dmxR8) and hydroxylated at C-5 by dmxR9, yielding the electron-rich aromatic which could eliminate H(2)O to form the ortho-quinonemethide, followed by tautomerisation to paraquinone and complete the formal reduction to produce the 10-methylgroup. Conjugate addition of C-4a-OH to the resulting paraquinone by the monooxygenase dmxR10 then gives cyclohexadienone, which is then reduced at C-5 by the short chain dehydrogenase dmxR3 to give the dihydroxanthone. The 6,7-epoxide in the cryptosporioptides could be introduced by the cytochrome P450 monooxygenase dmxL3. The highly reducing PKS dmxL2 manufactures butyrate, which is further carboxylated by dmxL1 to form ethylmalonate. It is not yet clear whether the carboxylation occurs while the butyrate is attached to the ACP of dmxL2, but this unusual fungal metabolite could then be esterified to O-5 by the O-acetyltransferase dmxR13. Finally, dimerization performed by dmxR5 gives the observed dimers cryptosporioptides A, B and C as the final products of the pathway. The sequence is that of Decarboxylase dmxR15 from Cryptosporiopsis sp. (strain 8999).